The chain runs to 329 residues: GTP 3',8-cyclase (329 aa).

One can recognise a Radical SAM core domain in the interval 8-234 (AFARKFYYLR…QLRQRSDGPA (227 aa)). Arginine 17 is a binding site for GTP. [4Fe-4S] cluster contacts are provided by cysteine 24 and cysteine 28. Tyrosine 30 is a binding site for S-adenosyl-L-methionine. Cysteine 31 contacts [4Fe-4S] cluster. A GTP-binding site is contributed by arginine 68. Glycine 72 serves as a coordination point for S-adenosyl-L-methionine. Threonine 99 is a GTP binding site. Serine 123 serves as a coordination point for S-adenosyl-L-methionine. Lysine 160 contacts GTP. Position 194 (methionine 194) interacts with S-adenosyl-L-methionine. Cysteine 257 and cysteine 260 together coordinate [4Fe-4S] cluster. Residue 262–264 (RLR) coordinates GTP. Cysteine 274 contributes to the [4Fe-4S] cluster binding site.

It belongs to the radical SAM superfamily. MoaA family. Monomer and homodimer. It depends on [4Fe-4S] cluster as a cofactor.

It catalyses the reaction GTP + AH2 + S-adenosyl-L-methionine = (8S)-3',8-cyclo-7,8-dihydroguanosine 5'-triphosphate + 5'-deoxyadenosine + L-methionine + A + H(+). Its pathway is cofactor biosynthesis; molybdopterin biosynthesis. Catalyzes the cyclization of GTP to (8S)-3',8-cyclo-7,8-dihydroguanosine 5'-triphosphate. In Salmonella dublin (strain CT_02021853), this protein is GTP 3',8-cyclase.